Consider the following 275-residue polypeptide: Dermonecrotic toxin SpaSicTox-betaIIA3 (275 aa).

The active site involves H5. Mg(2+) is bound by residues E25 and D27. The active-site Nucleophile is the H41. 2 disulfide bridges follow: C45–C51 and C47–C190. D85 is a binding site for Mg(2+).

It belongs to the arthropod phospholipase D family. Class II subfamily. The cofactor is Mg(2+). Expressed by the venom gland.

Its subcellular location is the secreted. It carries out the reaction an N-(acyl)-sphingosylphosphocholine = an N-(acyl)-sphingosyl-1,3-cyclic phosphate + choline. The catalysed reaction is an N-(acyl)-sphingosylphosphoethanolamine = an N-(acyl)-sphingosyl-1,3-cyclic phosphate + ethanolamine. It catalyses the reaction a 1-acyl-sn-glycero-3-phosphocholine = a 1-acyl-sn-glycero-2,3-cyclic phosphate + choline. The enzyme catalyses a 1-acyl-sn-glycero-3-phosphoethanolamine = a 1-acyl-sn-glycero-2,3-cyclic phosphate + ethanolamine. In terms of biological role, dermonecrotic toxins cleave the phosphodiester linkage between the phosphate and headgroup of certain phospholipids (sphingolipid and lysolipid substrates), forming an alcohol (often choline) and a cyclic phosphate. This toxin acts on sphingomyelin (SM). It may also act on ceramide phosphoethanolamine (CPE), lysophosphatidylcholine (LPC) and lysophosphatidylethanolamine (LPE), but not on lysophosphatidylserine (LPS), and lysophosphatidylglycerol (LPG). It acts by transphosphatidylation, releasing exclusively cyclic phosphate products as second products. Induces dermonecrosis, hemolysis, increased vascular permeability, edema, inflammatory response, and platelet aggregation. In Sicarius patagonicus (Six-eyed sand spider), this protein is Dermonecrotic toxin SpaSicTox-betaIIA3.